The sequence spans 95 residues: Aspartyl/glutamyl-tRNA(Asn/Gln) amidotransferase subunit C (95 aa).

This sequence belongs to the GatC family. As to quaternary structure, heterotrimer of A, B and C subunits.

It carries out the reaction L-glutamyl-tRNA(Gln) + L-glutamine + ATP + H2O = L-glutaminyl-tRNA(Gln) + L-glutamate + ADP + phosphate + H(+). The catalysed reaction is L-aspartyl-tRNA(Asn) + L-glutamine + ATP + H2O = L-asparaginyl-tRNA(Asn) + L-glutamate + ADP + phosphate + 2 H(+). Allows the formation of correctly charged Asn-tRNA(Asn) or Gln-tRNA(Gln) through the transamidation of misacylated Asp-tRNA(Asn) or Glu-tRNA(Gln) in organisms which lack either or both of asparaginyl-tRNA or glutaminyl-tRNA synthetases. The reaction takes place in the presence of glutamine and ATP through an activated phospho-Asp-tRNA(Asn) or phospho-Glu-tRNA(Gln). This Magnetococcus marinus (strain ATCC BAA-1437 / JCM 17883 / MC-1) protein is Aspartyl/glutamyl-tRNA(Asn/Gln) amidotransferase subunit C.